The sequence spans 262 residues: Electron transfer flavoprotein beta subunit lysine methyltransferase (262 aa).

The N-terminal 38 residues, 1–38 (MALSLGWKAHRNHCGLLLQALRSSGLLLFPCGQCPWRG), are a transit peptide targeting the mitochondrion.

Belongs to the methyltransferase superfamily. ETFBKMT family. Interacts with HSPD1; this protein may possibly be a methylation substrate.

The protein localises to the cytoplasm. The protein resides in the mitochondrion matrix. It catalyses the reaction L-lysyl-[protein] + 3 S-adenosyl-L-methionine = N(6),N(6),N(6)-trimethyl-L-lysyl-[protein] + 3 S-adenosyl-L-homocysteine + 3 H(+). Its function is as follows. Protein-lysine methyltransferase that selectively trimethylates the flavoprotein ETFB in mitochondria. Thereby, may negatively regulate the function of ETFB in electron transfer from Acyl-CoA dehydrogenases to the main respiratory chain. The sequence is that of Electron transfer flavoprotein beta subunit lysine methyltransferase from Homo sapiens (Human).